The sequence spans 164 residues: uncharacterized protein (164 aa).

The protein localises to the mitochondrion. This is an uncharacterized protein from Arabidopsis thaliana (Mouse-ear cress).